Here is a 332-residue protein sequence, read N- to C-terminus: GTP 3',8-cyclase (332 aa).

One can recognise a Radical SAM core domain in the interval 7-221; sequence SYDRLHDYVR…FDTCKDNGLA (215 aa). R16 serves as a coordination point for GTP. Residues C23 and C27 each coordinate [4Fe-4S] cluster. Y29 contacts S-adenosyl-L-methionine. Residue C30 coordinates [4Fe-4S] cluster. R66 serves as a coordination point for GTP. G70 is a binding site for S-adenosyl-L-methionine. T97 is a binding site for GTP. S121 is an S-adenosyl-L-methionine binding site. K158 is a binding site for GTP. M192 serves as a coordination point for S-adenosyl-L-methionine. Residues C256 and C259 each contribute to the [4Fe-4S] cluster site. 261 to 263 provides a ligand contact to GTP; that stretch reads RLR. C273 serves as a coordination point for [4Fe-4S] cluster.

The protein belongs to the radical SAM superfamily. MoaA family. Monomer and homodimer. [4Fe-4S] cluster serves as cofactor.

The catalysed reaction is GTP + AH2 + S-adenosyl-L-methionine = (8S)-3',8-cyclo-7,8-dihydroguanosine 5'-triphosphate + 5'-deoxyadenosine + L-methionine + A + H(+). It functions in the pathway cofactor biosynthesis; molybdopterin biosynthesis. Functionally, catalyzes the cyclization of GTP to (8S)-3',8-cyclo-7,8-dihydroguanosine 5'-triphosphate. The sequence is that of GTP 3',8-cyclase from Lactiplantibacillus plantarum (strain ATCC BAA-793 / NCIMB 8826 / WCFS1) (Lactobacillus plantarum).